The primary structure comprises 210 residues: Putative biopolymer transport protein ExbB-like 3 (210 aa).

Helical transmembrane passes span 2 to 22 (AGGI…ALII), 104 to 124 (LFQT…ILGL), and 152 to 172 (LVST…ANVF).

This sequence belongs to the ExbB/TolQ family.

It is found in the cell inner membrane. Functionally, involved in the TonB-dependent energy-dependent transport of various receptor-bound substrates. Protects ExbD from proteolytic degradation and functionally stabilizes TonB. This chain is Putative biopolymer transport protein ExbB-like 3, found in Synechocystis sp. (strain ATCC 27184 / PCC 6803 / Kazusa).